The primary structure comprises 729 residues: Probable pre-mRNA-splicing factor ATP-dependent RNA helicase DEAH3 (729 aa).

The 170-residue stretch at 75-244 (LNTLNSNQTL…FSGAPLMKVP (170 aa)) folds into the Helicase ATP-binding domain. ATP is bound at residue 88 to 95 (GETGSGKT). The short motif at 191–194 (DEAH) is the DEAH box element. One can recognise a Helicase C-terminal domain in the interval 269-449 (TVVQIHMCEP…NTVLTLKKLG (181 aa)).

It belongs to the DEAD box helicase family. DEAH subfamily. PRP43 sub-subfamily.

It carries out the reaction ATP + H2O = ADP + phosphate + H(+). May be involved in pre-mRNA splicing. The chain is Probable pre-mRNA-splicing factor ATP-dependent RNA helicase DEAH3 from Arabidopsis thaliana (Mouse-ear cress).